The chain runs to 217 residues: Cytidylate kinase (217 aa).

10–18 lines the ATP pocket; it reads GPAGAGKST.

This sequence belongs to the cytidylate kinase family. Type 1 subfamily.

The protein resides in the cytoplasm. The catalysed reaction is CMP + ATP = CDP + ADP. It catalyses the reaction dCMP + ATP = dCDP + ADP. This chain is Cytidylate kinase, found in Clostridium botulinum (strain Langeland / NCTC 10281 / Type F).